The primary structure comprises 396 residues: Elongation factor Tu (396 aa).

One can recognise a tr-type G domain in the interval 10 to 206; sequence KPHVNVGTIG…ALDDYIPEPE (197 aa). Residues 19 to 26 form a G1 region; that stretch reads GHVDHGKT. Residue 19–26 coordinates GTP; that stretch reads GHVDHGKT. Thr26 lines the Mg(2+) pocket. Residues 60–64 are G2; the sequence is GITIA. A G3 region spans residues 81–84; it reads DCPG. GTP is bound by residues 81 to 85 and 136 to 139; these read DCPGH and NKAD. A G4 region spans residues 136–139; sequence NKAD. The tract at residues 174–176 is G5; it reads SAL.

This sequence belongs to the TRAFAC class translation factor GTPase superfamily. Classic translation factor GTPase family. EF-Tu/EF-1A subfamily. In terms of assembly, monomer.

It is found in the cytoplasm. It carries out the reaction GTP + H2O = GDP + phosphate + H(+). Its function is as follows. GTP hydrolase that promotes the GTP-dependent binding of aminoacyl-tRNA to the A-site of ribosomes during protein biosynthesis. This is Elongation factor Tu from Methylococcus capsulatus (strain ATCC 33009 / NCIMB 11132 / Bath).